Reading from the N-terminus, the 610-residue chain is Elongation factor 4 (610 aa).

In terms of domain architecture, tr-type G spans 11-193 (EKIRNFSIIA…QIVEKVPAPT (183 aa)). GTP-binding positions include 23–28 (DHGKST) and 140–143 (NKID).

The protein belongs to the TRAFAC class translation factor GTPase superfamily. Classic translation factor GTPase family. LepA subfamily.

The protein localises to the cell membrane. It carries out the reaction GTP + H2O = GDP + phosphate + H(+). Functionally, required for accurate and efficient protein synthesis under certain stress conditions. May act as a fidelity factor of the translation reaction, by catalyzing a one-codon backward translocation of tRNAs on improperly translocated ribosomes. Back-translocation proceeds from a post-translocation (POST) complex to a pre-translocation (PRE) complex, thus giving elongation factor G a second chance to translocate the tRNAs correctly. Binds to ribosomes in a GTP-dependent manner. The sequence is that of Elongation factor 4 from Streptococcus pyogenes serotype M49 (strain NZ131).